The chain runs to 810 residues: Valine--tRNA ligase (810 aa).

The short motif at 45 to 55 is the 'HIGH' region element; the sequence is PTISGQLHIGH. Residues 534–538 carry the 'KMSKS' region motif; the sequence is KMSKS. Lysine 537 is a binding site for ATP.

Belongs to the class-I aminoacyl-tRNA synthetase family. ValS type 2 subfamily. Monomer.

It is found in the cytoplasm. It carries out the reaction tRNA(Val) + L-valine + ATP = L-valyl-tRNA(Val) + AMP + diphosphate. Its function is as follows. Catalyzes the attachment of valine to tRNA(Val). As ValRS can inadvertently accommodate and process structurally similar amino acids such as threonine, to avoid such errors, it has a 'posttransfer' editing activity that hydrolyzes mischarged Thr-tRNA(Val) in a tRNA-dependent manner. The chain is Valine--tRNA ligase from Ehrlichia ruminantium (strain Welgevonden).